The following is a 665-amino-acid chain: MRGCLQVLRWLSTSPARRPVSSGLRLRSYEIVSPSILRPFTSTVRRQAQASRNVSDLEKRIAEIPIERFRNFCIVAHVDHGKSTLSDRLLELTGVIEPGSNKQVLDKLDVERERGITVKAQTCTMLYNHNGEDYLLHLIDTPGHVDFRAEVSRSYASCGGALLLVDASQGVQAQTVANFYLAFAQGLELVPVLNKVDLPSADPERALEQMRSSFELDTDNAIKVSAKTGLNVEQLLPTVIERIPAPVGDHTNALRMLLVDSWYSTYKGVILLVRVFDGEIRAGDQVVSFATGLKYYVGEVGIMYPDQTPQSVLRAGQVGYIYFNPGMKRSKEAKIGDTFTKVGYEKKVEPLPGFEEPKSMVFVAAYPSDADHFEHLEDSVNQLILNDRSITVQKESSEALGAGFRLGFLGTLHCSVFEDRLRHEHGASILITPPTVPVKVIYKDGKEVTVTNPAHFPDEDEIRAKVAELREPYVMATLTFPDEYLGKVIELCEANRGIQHTLEYFTSSQVILKYELPLGQLVEDFFGKLKGSTKGYATLDYEEAGWKASNIVKLQLLVNKKPVDAVARIVHYSQVERLGKQWVTKFKEHVDRQMFEIIIQAAVGRKVVARETIKPYRKDVLAKLHASDVSRRRKLLEKQKEGRKRLNAIGNVVIDHSAFQAFLSK.

The transit peptide at M1–N53 directs the protein to the mitochondrion. A tr-type G domain is found at E67 to V247. Residues A76–S83, D140–H144, and N194–D197 contribute to the GTP site.

This sequence belongs to the TRAFAC class translation factor GTPase superfamily. Classic translation factor GTPase family. LepA subfamily.

Its subcellular location is the mitochondrion inner membrane. It catalyses the reaction GTP + H2O = GDP + phosphate + H(+). In terms of biological role, promotes mitochondrial protein synthesis. May act as a fidelity factor of the translation reaction, by catalyzing a one-codon backward translocation of tRNAs on improperly translocated ribosomes. Binds to mitochondrial ribosomes in a GTP-dependent manner. This chain is Translation factor guf1, mitochondrial (guf1), found in Talaromyces stipitatus (strain ATCC 10500 / CBS 375.48 / QM 6759 / NRRL 1006) (Penicillium stipitatum).